The chain runs to 215 residues: Adenylate kinase (215 aa).

10 to 15 (GAGKGT) is an ATP binding site. The NMP stretch occupies residues 30–59 (STGDILRENVKNETELGKKAKEYMDKGLLV). Residues T31, R36, 57-59 (LLV), 85-88 (GFPR), and Q92 each bind AMP. Residues 126–163 (GRRICKNCGASFHVIYRPPQKEGVCDVCGGELYQREDD) form an LID region. R127 contacts ATP. Positions 130 and 133 each coordinate Zn(2+). Residue 136 to 137 (SF) coordinates ATP. The Zn(2+) site is built by C150 and C153. AMP contacts are provided by R160 and R171. Position 198 (Q198) interacts with ATP.

This sequence belongs to the adenylate kinase family. As to quaternary structure, monomer.

The protein resides in the cytoplasm. The enzyme catalyses AMP + ATP = 2 ADP. It participates in purine metabolism; AMP biosynthesis via salvage pathway; AMP from ADP: step 1/1. Its function is as follows. Catalyzes the reversible transfer of the terminal phosphate group between ATP and AMP. Plays an important role in cellular energy homeostasis and in adenine nucleotide metabolism. This Caldicellulosiruptor bescii (strain ATCC BAA-1888 / DSM 6725 / KCTC 15123 / Z-1320) (Anaerocellum thermophilum) protein is Adenylate kinase.